The following is a 251-amino-acid chain: Spermatogenesis-associated protein 46 (251 aa).

The protein localises to the nucleus membrane. In terms of biological role, plays a role in spermiogenesis and fertilization. This is Spermatogenesis-associated protein 46 (SPATA46) from Macaca fascicularis (Crab-eating macaque).